Consider the following 463-residue polypeptide: Lysosomal proton-coupled steroid conjugate and bile acid symporter SLC46A3 (463 aa).

A signal peptide spans 1 to 20 (MKILFVEPAIFLSAFAMTLT). Residues 21-73 (SPLTTQYVYRRIWEETGNYTFSSDSNISECEKNKSSPIFAFQEEVQKKVSRFN) lie on the Extracellular side of the membrane. Residues Asn38, Asn46, and Asn53 are each glycosylated (N-linked (GlcNAc...) asparagine). A helical membrane pass occupies residues 74-94 (LQMDISGLIPGLVSTFILLSI). The Cytoplasmic segment spans residues 95–101 (SDHYGRK). Residues 102-124 (FPMILSSVGALATSVWLCLLCYF) traverse the membrane as a helical segment. Residues 125–133 (AFPFQLLIA) are Extracellular-facing. The helical transmembrane segment at 134–156 (STFIGAFCGNYTTFWGACFAYIV) threads the bilayer. Topologically, residues 157-170 (DQCKEHKQKTIRIA) are cytoplasmic. A helical membrane pass occupies residues 171–191 (VIDFLLGLVTGLTGLSSGYFI). Over 192-197 (RELGFG) the chain is Extracellular. Residues 198 to 218 (WSFLIIAASLAVNLIYILFFL) form a helical membrane-spanning segment. The Cytoplasmic segment spans residues 219 to 261 (GDPVKECSSQNVTMSCSEGFKNLFYRTYMLFKNASGKRRFLLC). Residues 262-282 (LLLFTTITYFFVVIGIAPIFI) form a helical membrane-spanning segment. Residues 283 to 294 (LYELDSPLCWNE) lie on the Extracellular side of the membrane. A helical membrane pass occupies residues 295 to 315 (VFIGYGSALGSASFLTSFLGI). The Cytoplasmic portion of the chain corresponds to 316–324 (WLFSYCMED). The chain crosses the membrane as a helical span at residues 325–345 (IHMAFIGIFTTMTGMVMTAFA). Residues 346–347 (ST) are Extracellular-facing. A helical membrane pass occupies residues 348–368 (TLMMFLARVPFLFTIVPFSVL). The Cytoplasmic segment spans residues 369–382 (RSMLSKVVRSTEQG). Residues 383-403 (ILFACIAFLETLGGVTAVSTF) form a helical membrane-spanning segment. At 404–415 (NGIYSATVAWYP) the chain is on the extracellular side. The chain crosses the membrane as a helical span at residues 416–436 (GFTFLLSAGLLLLPAISLCVV). Topologically, residues 437–463 (KCTSWNEGSYELLIQEESSEDASDRAC) are cytoplasmic. The short motif at 446-449 (YELL) is the Tyrosine-based lysosomal-sorting motif element.

It belongs to the major facilitator superfamily. SLC46A family.

It is found in the lysosome membrane. It catalyses the reaction estrone 3-sulfate(out) + n H(+)(out) = estrone 3-sulfate(in) + n H(+)(in). The enzyme catalyses 25-hydroxyvitamin D3 sulfate(out) + n H(+)(out) = 25-hydroxyvitamin D3 sulfate(in) + n H(+)(in). It carries out the reaction cholate(out) + n H(+)(out) = cholate(in) + n H(+)(in). The catalysed reaction is glycocholate(out) + n H(+)(out) = glycocholate(in) + n H(+)(in). It catalyses the reaction taurocholate(out) + n H(+)(out) = taurocholate(in) + n H(+)(in). The enzyme catalyses dehydroepiandrosterone 3-sulfate(out) + n H(+)(out) = dehydroepiandrosterone 3-sulfate(in) + n H(+)(in). It carries out the reaction N-acetyl-D-muramoyl-L-alanyl-D-isoglutamine(out) + n H(+)(out) = N-acetyl-D-muramoyl-L-alanyl-D-isoglutamine(in) + n H(+)(in). The catalysed reaction is 2',3'-cGAMP(out) + n H(+)(out) = 2',3'-cGAMP(in) + n H(+)(in). Lysosomal proton-coupled steroid conjugate and bile acid transporter. Preferentially recognizes lipophilic steroid conjugates or bile acis as endogenous substrates and seems to mediate escape from lysosomes to the cytoplasm. Modulates hepatic cytosolic copper homeostasis, maybe acting as a lysosomal copper transporter and sequestering copper ions in the lysosome. Delivers pathogen-associated molecular patterns to cytosolic pattern recognition receptors as part of the innate immune response to microbes. Selectively transports bacterial muramyl dipeptide (MDP) into the cytosol for recognition by NOD2, triggering inflammatory responses. Likely acts as a redundant importer of cyclic GMP-AMP dinucleotides (cGAMPs) in monocyte and macrophage cell lineages. The transport mechanism, its electrogenicity and stoichiometry remain to be elucidated. This is Lysosomal proton-coupled steroid conjugate and bile acid symporter SLC46A3 (SLC46A3) from Pongo abelii (Sumatran orangutan).